A 623-amino-acid chain; its full sequence is Chaperone protein HtpG (623 aa).

The a; substrate-binding stretch occupies residues 1–326 (MAEEKRQFQA…SQDLPLNVSR (326 aa)). Residues 327-543 (EMLQHNPVLS…EGEMSMHLEK (217 aa)) are b. The interval 544–623 (MLRAHNQAPG…VSVMEKGLLG (80 aa)) is c.

Belongs to the heat shock protein 90 family. As to quaternary structure, homodimer.

Its subcellular location is the cytoplasm. Functionally, molecular chaperone. Has ATPase activity. The sequence is that of Chaperone protein HtpG from Paramagnetospirillum magneticum (strain ATCC 700264 / AMB-1) (Magnetospirillum magneticum).